The chain runs to 331 residues: L-lactate dehydrogenase A chain (331 aa).

NAD(+)-binding positions include 29 to 57 (GMVG…MEDK) and Arg98. Substrate contacts are provided by Arg105, Asn137, and Arg168. Asn137 contacts NAD(+). His192 serves as the catalytic Proton acceptor. Thr247 is a binding site for substrate.

Belongs to the LDH/MDH superfamily. LDH family. As to quaternary structure, homotetramer.

The protein localises to the cytoplasm. The enzyme catalyses (S)-lactate + NAD(+) = pyruvate + NADH + H(+). Its pathway is fermentation; pyruvate fermentation to lactate; (S)-lactate from pyruvate: step 1/1. Functionally, interconverts simultaneously and stereospecifically pyruvate and lactate with concomitant interconversion of NADH and NAD(+). The sequence is that of L-lactate dehydrogenase A chain (ldha) from Dissostichus mawsoni (Antarctic cod).